A 59-amino-acid chain; its full sequence is Large ribosomal subunit protein bL32 (59 aa).

Residues 1 to 19 (MAQPKKKTSKSRRNMRRSH) show a composition bias toward basic residues. Residues 1–20 (MAQPKKKTSKSRRNMRRSHD) form a disordered region.

It belongs to the bacterial ribosomal protein bL32 family.

The protein is Large ribosomal subunit protein bL32 of Maridesulfovibrio salexigens (strain ATCC 14822 / DSM 2638 / NCIMB 8403 / VKM B-1763) (Desulfovibrio salexigens).